Reading from the N-terminus, the 326-residue chain is tRNA uridine(34) hydroxylase (326 aa).

Residues 123–217 form the Rhodanese domain; sequence SDPDVLLVDT…YLEEVPEENS (95 aa). Cys177 serves as the catalytic Cysteine persulfide intermediate. A compositionally biased stretch (basic and acidic residues) spans 276 to 320; sequence EEQKSRFREREKQVQLANERGETHVGGDAAKLIEQRKQEKKEKKQ. The disordered stretch occupies residues 276 to 326; the sequence is EEQKSRFREREKQVQLANERGETHVGGDAAKLIEQRKQEKKEKKQQQRSSK.

Belongs to the TrhO family.

It carries out the reaction uridine(34) in tRNA + AH2 + O2 = 5-hydroxyuridine(34) in tRNA + A + H2O. Functionally, catalyzes oxygen-dependent 5-hydroxyuridine (ho5U) modification at position 34 in tRNAs. The polypeptide is tRNA uridine(34) hydroxylase (Aliivibrio salmonicida (strain LFI1238) (Vibrio salmonicida (strain LFI1238))).